A 239-amino-acid polypeptide reads, in one-letter code: Protein-S-isoprenylcysteine O-methyltransferase (239 aa).

Over 1–23 (MHQDFQEDEHEYPDIRRNPLHEV) the chain is Cytoplasmic. A helical transmembrane segment spans residues 24-44 (TMTSYILGILLGIFVGLFPQI). The Lumenal segment spans residues 45-47 (RFK). Residues 48-68 (NFNLFIIALSLFHFLEYYITA) traverse the membrane as a helical segment. Residues 69 to 88 (KYNPLKVHSESFLLNNGKSY) lie on the Cytoplasmic side of the membrane. Residues 89–109 (MAAHSFAILECLVESFLFPDL) form a helical membrane-spanning segment. K110 is a topological domain (lumenal). Residues 111-131 (IFSYSLATKLCTVLGCLLVIL) traverse the membrane as a helical segment. Residues 132-175 (GQYTRTIAMHTAGHSFSHIVKTKKESDHVLVKTGVYSWSRHPSY) lie on the Cytoplasmic side of the membrane. S-adenosyl-L-methionine contacts are provided by residues 159–162 (HVLV), Y167, and 172–175 (HPSY). The helical intramembrane region spans 176–206 (LGFFWWAIGTQLLLLNPLSLVIFIFVLWKFF). Residues 207–239 (SDRIRVEEKYLIEFFSAEYIEYKNKVGVGIPFI) lie on the Cytoplasmic side of the membrane. Residue R209 participates in substrate binding. S-adenosyl-L-methionine is bound at residue E213.

This sequence belongs to the class VI-like SAM-binding methyltransferase superfamily. Isoprenylcysteine carboxyl methyltransferase family.

It is found in the endoplasmic reticulum membrane. It carries out the reaction [protein]-C-terminal S-[(2E,6E)-farnesyl]-L-cysteine + S-adenosyl-L-methionine = [protein]-C-terminal S-[(2E,6E)-farnesyl]-L-cysteine methyl ester + S-adenosyl-L-homocysteine. In terms of biological role, mediates C-terminal methylation of the isoprenylated C-terminal cysteine in A-factor mating pheromone and Ras proteins. Does not have a preference for the farnesyl or geranylgeranyl moieties in the model substrates N-acetyl-S-farnesyl-L-cysteine (AFC) and N-acetyl-S-geranylgeranyl-L-cysteine (AGGC) in vitro. The protein is Protein-S-isoprenylcysteine O-methyltransferase (STE14) of Saccharomyces cerevisiae (strain ATCC 204508 / S288c) (Baker's yeast).